A 532-amino-acid chain; its full sequence is CTP synthase (532 aa).

An amidoligase domain region spans residues 1–265 (MKYIVVTGGV…DEYLMRKLNL (265 aa)). A CTP-binding site is contributed by Ser-12. A UTP-binding site is contributed by Ser-12. Residues 13 to 18 (GLGKGI) and Asp-70 contribute to the ATP site. Residues Asp-70 and Glu-140 each contribute to the Mg(2+) site. CTP-binding positions include 147–149 (DIE), 186–191 (KTKPTQ), and Lys-222. UTP contacts are provided by residues 186 to 191 (KTKPTQ) and Lys-222. Residues 289–529 (SIAIVGKYVD…VRAALKYRRE (241 aa)) enclose the Glutamine amidotransferase type-1 domain. Residue Gly-349 coordinates L-glutamine. Cys-376 (nucleophile; for glutamine hydrolysis) is an active-site residue. L-glutamine contacts are provided by residues 377–380 (FGFQ), Glu-400, and Arg-457. Active-site residues include His-502 and Glu-504.

This sequence belongs to the CTP synthase family. As to quaternary structure, homotetramer.

It carries out the reaction UTP + L-glutamine + ATP + H2O = CTP + L-glutamate + ADP + phosphate + 2 H(+). It catalyses the reaction L-glutamine + H2O = L-glutamate + NH4(+). The catalysed reaction is UTP + NH4(+) + ATP = CTP + ADP + phosphate + 2 H(+). It functions in the pathway pyrimidine metabolism; CTP biosynthesis via de novo pathway; CTP from UDP: step 2/2. With respect to regulation, allosterically activated by GTP, when glutamine is the substrate; GTP has no effect on the reaction when ammonia is the substrate. The allosteric effector GTP functions by stabilizing the protein conformation that binds the tetrahedral intermediate(s) formed during glutamine hydrolysis. Inhibited by the product CTP, via allosteric rather than competitive inhibition. Catalyzes the ATP-dependent amination of UTP to CTP with either L-glutamine or ammonia as the source of nitrogen. Regulates intracellular CTP levels through interactions with the four ribonucleotide triphosphates. The chain is CTP synthase from Archaeoglobus fulgidus (strain ATCC 49558 / DSM 4304 / JCM 9628 / NBRC 100126 / VC-16).